The primary structure comprises 507 residues: Fumarate hydratase, mitochondrial (507 aa).

Residues 1-41 (MNRAFCLLARSRRFPRVPSAGAVLSGEAATLPRCAPNVVRM) constitute a mitochondrion transit peptide. N6-acetyllysine; alternate occurs at positions 58, 63, and 77. Lys-58, Lys-63, and Lys-77 each carry N6-succinyllysine; alternate. At Thr-82 the chain carries Phosphothreonine. Lys-91 is modified (N6-acetyllysine). Lys-112 and Lys-119 each carry N6-acetyllysine; alternate. An N6-succinyllysine; alternate mark is found at Lys-112 and Lys-119. Substrate-binding positions include 142–144 (SGT), 173–176 (HPND), and 183–185 (SSN). Lys-210 carries the post-translational modification N6-acetyllysine. The residue at position 220 (Lys-220) is an N6-acetyllysine; alternate. An N6-succinyllysine; alternate modification is found at Lys-220. Thr-231 provides a ligand contact to substrate. His-232 (proton donor/acceptor) is an active-site residue. Thr-233 is subject to Phosphothreonine. The residue at position 289 (Lys-289) is an N6-acetyllysine; alternate. Lys-289 bears the N6-succinyllysine; alternate mark. Ser-362 is a catalytic residue. Substrate-binding positions include Ser-363 and 368-370 (KVN). At Ser-363 the chain carries Phosphoserine. N6-succinyllysine occurs at positions 464 and 470. The residue at position 499 (Lys-499) is an N6-acetyllysine.

It belongs to the class-II fumarase/aspartase family. Fumarase subfamily. Homotetramer. Interacts with H2AZ1. Post-translationally, phosphorylation at Thr-233 by PRKDC in response to DNA damage promotes translocation to the nucleus and recruitment to DNA double-strand breaks (DSBs).

The protein localises to the mitochondrion. It localises to the cytoplasm. It is found in the cytosol. The protein resides in the nucleus. Its subcellular location is the chromosome. The catalysed reaction is (S)-malate = fumarate + H2O. The protein operates within carbohydrate metabolism; tricarboxylic acid cycle; (S)-malate from fumarate: step 1/1. Its function is as follows. Catalyzes the reversible stereospecific interconversion of fumarate to L-malate. Experiments in other species have demonstrated that specific isoforms of this protein act in defined pathways and favor one direction over the other. In terms of biological role, catalyzes the hydration of fumarate to L-malate in the tricarboxylic acid (TCA) cycle to facilitate a transition step in the production of energy in the form of NADH. Catalyzes the dehydration of L-malate to fumarate. Fumarate metabolism in the cytosol plays a role during urea cycle and arginine metabolism; fumarate being a by-product of the urea cycle and amino-acid catabolism. Also plays a role in DNA repair by promoting non-homologous end-joining (NHEJ). In response to DNA damage and phosphorylation by PRKDC, translocates to the nucleus and accumulates at DNA double-strand breaks (DSBs): acts by catalyzing formation of fumarate, an inhibitor of KDM2B histone demethylase activity, resulting in enhanced dimethylation of histone H3 'Lys-36' (H3K36me2). The sequence is that of Fumarate hydratase, mitochondrial from Rattus norvegicus (Rat).